Consider the following 294-residue polypeptide: Urease accessory protein UreD 1 (294 aa).

A disordered region spans residues 1 to 20 (MALSLDDLPEKPAPAEPVSA).

The protein belongs to the UreD family. UreD, UreF and UreG form a complex that acts as a GTP-hydrolysis-dependent molecular chaperone, activating the urease apoprotein by helping to assemble the nickel containing metallocenter of UreC. The UreE protein probably delivers the nickel.

The protein resides in the cytoplasm. Functionally, required for maturation of urease via the functional incorporation of the urease nickel metallocenter. The polypeptide is Urease accessory protein UreD 1 (Methylorubrum populi (strain ATCC BAA-705 / NCIMB 13946 / BJ001) (Methylobacterium populi)).